A 422-amino-acid chain; its full sequence is Serine--tRNA ligase (422 aa).

229–231 (TAE) is a binding site for L-serine. ATP is bound at residue 260 to 262 (RAE). Residue Glu283 coordinates L-serine. Position 347 to 350 (347 to 350 (EISS)) interacts with ATP. Position 383 (Ser383) interacts with L-serine.

It belongs to the class-II aminoacyl-tRNA synthetase family. Type-1 seryl-tRNA synthetase subfamily. In terms of assembly, homodimer. The tRNA molecule binds across the dimer.

It localises to the cytoplasm. It catalyses the reaction tRNA(Ser) + L-serine + ATP = L-seryl-tRNA(Ser) + AMP + diphosphate + H(+). The catalysed reaction is tRNA(Sec) + L-serine + ATP = L-seryl-tRNA(Sec) + AMP + diphosphate + H(+). The protein operates within aminoacyl-tRNA biosynthesis; selenocysteinyl-tRNA(Sec) biosynthesis; L-seryl-tRNA(Sec) from L-serine and tRNA(Sec): step 1/1. In terms of biological role, catalyzes the attachment of serine to tRNA(Ser). Is also able to aminoacylate tRNA(Sec) with serine, to form the misacylated tRNA L-seryl-tRNA(Sec), which will be further converted into selenocysteinyl-tRNA(Sec). This Heliobacterium modesticaldum (strain ATCC 51547 / Ice1) protein is Serine--tRNA ligase.